The primary structure comprises 120 residues: Large ribosomal subunit protein uL18 (120 aa).

The protein belongs to the universal ribosomal protein uL18 family. In terms of assembly, part of the 50S ribosomal subunit; part of the 5S rRNA/L5/L18/L25 subcomplex. Contacts the 5S and 23S rRNAs.

Its function is as follows. This is one of the proteins that bind and probably mediate the attachment of the 5S RNA into the large ribosomal subunit, where it forms part of the central protuberance. This is Large ribosomal subunit protein uL18 from Rippkaea orientalis (strain PCC 8801 / RF-1) (Cyanothece sp. (strain PCC 8801)).